We begin with the raw amino-acid sequence, 234 residues long: Cytochrome b (234 aa).

4 consecutive transmembrane segments (helical) span residues 33–53 (FGSL…FLAM), 77–98 (WLIR…YMHV), 113–133 (WNIG…GYVL), and 178–198 (FFAF…IHLL). 2 residues coordinate heme b: His83 and His97. His182 and His196 together coordinate heme b. Residue His201 coordinates a ubiquinone. Residues 226-234 (IKDVLGFLM) form a helical membrane-spanning segment.

This sequence belongs to the cytochrome b family. In terms of assembly, the cytochrome bc1 complex contains 11 subunits: 3 respiratory subunits (MT-CYB, CYC1 and UQCRFS1), 2 core proteins (UQCRC1 and UQCRC2) and 6 low-molecular weight proteins (UQCRH/QCR6, UQCRB/QCR7, UQCRQ/QCR8, UQCR10/QCR9, UQCR11/QCR10 and a cleavage product of UQCRFS1). This cytochrome bc1 complex then forms a dimer. Heme b is required as a cofactor.

It localises to the mitochondrion inner membrane. Component of the ubiquinol-cytochrome c reductase complex (complex III or cytochrome b-c1 complex) that is part of the mitochondrial respiratory chain. The b-c1 complex mediates electron transfer from ubiquinol to cytochrome c. Contributes to the generation of a proton gradient across the mitochondrial membrane that is then used for ATP synthesis. This is Cytochrome b (MT-CYB) from Lepus alleni (Antelope jackrabbit).